The primary structure comprises 357 residues: sn-glycerol-3-phosphate import ATP-binding protein UgpC (357 aa).

One can recognise an ABC transporter domain in the interval 4 to 235; it reads LKLQAVTKSY…PASLFVASFI (232 aa). 37 to 44 is an ATP binding site; it reads GPSGCGKS.

Belongs to the ABC transporter superfamily. sn-glycerol-3-phosphate importer (TC 3.A.1.1.3) family. The complex is composed of two ATP-binding proteins (UgpC), two transmembrane proteins (UgpA and UgpE) and a solute-binding protein (UgpB).

It is found in the cell inner membrane. It carries out the reaction sn-glycerol 3-phosphate(out) + ATP + H2O = sn-glycerol 3-phosphate(in) + ADP + phosphate + H(+). Its function is as follows. Part of the ABC transporter complex UgpBAEC involved in sn-glycerol-3-phosphate (G3P) import. Responsible for energy coupling to the transport system. The sequence is that of sn-glycerol-3-phosphate import ATP-binding protein UgpC from Yersinia pseudotuberculosis serotype I (strain IP32953).